Consider the following 204-residue polypeptide: Small ribosomal subunit protein uS4 (204 aa).

The tract at residues 1-46 is disordered; the sequence is MSKRHSSKYKIDRRMGENIWGRPKSPVNRREYGPGQHGQRRRSKIS. The S4 RNA-binding domain occupies 94–157; sequence RRLDMIVYRA…QEMALVLEAQ (64 aa).

Belongs to the universal ribosomal protein uS4 family. Part of the 30S ribosomal subunit. Contacts protein S5. The interaction surface between S4 and S5 is involved in control of translational fidelity.

One of the primary rRNA binding proteins, it binds directly to 16S rRNA where it nucleates assembly of the body of the 30S subunit. In terms of biological role, with S5 and S12 plays an important role in translational accuracy. The polypeptide is Small ribosomal subunit protein uS4 (Zymomonas mobilis subsp. mobilis (strain ATCC 31821 / ZM4 / CP4)).